The following is a 129-amino-acid chain: Glycine cleavage system H protein (129 aa).

The region spanning 23–104 is the Lipoyl-binding domain; it reads TATIGITQHA…AYAAWLFRLK (82 aa). An N6-lipoyllysine modification is found at Lys-64.

It belongs to the GcvH family. In terms of assembly, the glycine cleavage system is composed of four proteins: P, T, L and H. The cofactor is (R)-lipoate.

In terms of biological role, the glycine cleavage system catalyzes the degradation of glycine. The H protein shuttles the methylamine group of glycine from the P protein to the T protein. This chain is Glycine cleavage system H protein, found in Nitrosospira multiformis (strain ATCC 25196 / NCIMB 11849 / C 71).